Consider the following 399-residue polypeptide: Elongation factor Tu (399 aa).

One can recognise a tr-type G domain in the interval 10–204; that stretch reads KPHVNIGTIG…AVDASIPEPE (195 aa). The G1 stretch occupies residues 19 to 26; it reads GHVDHGKT. 19 to 26 lines the GTP pocket; the sequence is GHVDHGKT. T26 is a Mg(2+) binding site. Residues 60-64 are G2; it reads GITIN. The G3 stretch occupies residues 81 to 84; it reads DCPG. GTP is bound by residues 81-85 and 136-139; these read DCPGH and NKCD. The G4 stretch occupies residues 136–139; sequence NKCD. The interval 174–176 is G5; sequence SGL.

Belongs to the TRAFAC class translation factor GTPase superfamily. Classic translation factor GTPase family. EF-Tu/EF-1A subfamily. Monomer.

It is found in the cytoplasm. The enzyme catalyses GTP + H2O = GDP + phosphate + H(+). GTP hydrolase that promotes the GTP-dependent binding of aminoacyl-tRNA to the A-site of ribosomes during protein biosynthesis. The chain is Elongation factor Tu from Prochlorococcus marinus (strain AS9601).